Consider the following 303-residue polypeptide: Nod factor export ATP-binding protein I (303 aa).

An ABC transporter domain is found at 5–235; that stretch reads LQMRNVRKLY…EIGCDVVEVY (231 aa). Position 37 to 44 (37 to 44) interacts with ATP; it reads GPNGAGKT.

Belongs to the ABC transporter superfamily. Lipooligosaccharide exporter (TC 3.A.1.102) family. As to quaternary structure, the complex is composed of two ATP-binding proteins (NodI) and two transmembrane proteins (NodJ).

It localises to the cell inner membrane. Functionally, part of the ABC transporter complex NodIJ involved in the export of the nodulation factors (Nod factors), the bacterial signal molecules that induce symbiosis and subsequent nodulation induction. Nod factors are LCO (lipo-chitin oligosaccharide), a modified beta-1,4-linked N-acetylglucosamine oligosaccharide. This subunit is responsible for energy coupling to the transport system. The polypeptide is Nod factor export ATP-binding protein I (Cupriavidus metallidurans (strain ATCC 43123 / DSM 2839 / NBRC 102507 / CH34) (Ralstonia metallidurans)).